The chain runs to 460 residues: Bifunctional protein GlmU (460 aa).

The pyrophosphorylase stretch occupies residues 1–235 (MALSAAIVLA…PLTVEGVNDR (235 aa)). UDP-N-acetyl-alpha-D-glucosamine is bound by residues 9–12 (LAAG), Lys-23, Gln-76, and 81–82 (GT). Residue Asp-109 participates in Mg(2+) binding. The UDP-N-acetyl-alpha-D-glucosamine site is built by Gly-146, Glu-161, Asn-176, and Asn-233. Asn-233 provides a ligand contact to Mg(2+). The tract at residues 236-256 (VQLAALSKTYNRRVCERWMRN) is linker. Residues 257–460 (GVTILDPETT…VEGWKPAWER (204 aa)) form an N-acetyltransferase region. Residues Arg-338 and Lys-356 each coordinate UDP-N-acetyl-alpha-D-glucosamine. The Proton acceptor role is filled by His-368. UDP-N-acetyl-alpha-D-glucosamine contacts are provided by Tyr-371 and Asn-382. Residues 391–392 (NY) and Ala-428 contribute to the acetyl-CoA site.

It in the N-terminal section; belongs to the N-acetylglucosamine-1-phosphate uridyltransferase family. The protein in the C-terminal section; belongs to the transferase hexapeptide repeat family. As to quaternary structure, homotrimer. Mg(2+) is required as a cofactor.

It is found in the cytoplasm. The enzyme catalyses alpha-D-glucosamine 1-phosphate + acetyl-CoA = N-acetyl-alpha-D-glucosamine 1-phosphate + CoA + H(+). It catalyses the reaction N-acetyl-alpha-D-glucosamine 1-phosphate + UTP + H(+) = UDP-N-acetyl-alpha-D-glucosamine + diphosphate. It functions in the pathway nucleotide-sugar biosynthesis; UDP-N-acetyl-alpha-D-glucosamine biosynthesis; N-acetyl-alpha-D-glucosamine 1-phosphate from alpha-D-glucosamine 6-phosphate (route II): step 2/2. The protein operates within nucleotide-sugar biosynthesis; UDP-N-acetyl-alpha-D-glucosamine biosynthesis; UDP-N-acetyl-alpha-D-glucosamine from N-acetyl-alpha-D-glucosamine 1-phosphate: step 1/1. It participates in bacterial outer membrane biogenesis; LPS lipid A biosynthesis. Catalyzes the last two sequential reactions in the de novo biosynthetic pathway for UDP-N-acetylglucosamine (UDP-GlcNAc). The C-terminal domain catalyzes the transfer of acetyl group from acetyl coenzyme A to glucosamine-1-phosphate (GlcN-1-P) to produce N-acetylglucosamine-1-phosphate (GlcNAc-1-P), which is converted into UDP-GlcNAc by the transfer of uridine 5-monophosphate (from uridine 5-triphosphate), a reaction catalyzed by the N-terminal domain. The protein is Bifunctional protein GlmU of Bifidobacterium longum subsp. infantis (strain ATCC 15697 / DSM 20088 / JCM 1222 / NCTC 11817 / S12).